The following is a 258-amino-acid chain: MKITKIEKKKRLYLVEIDKKESLYVTEDTIVKYMLTKEMALSKDQLEDIKNFAQFSHGKNLALYFISFKQRTEKEVRDYLFKHEINPHIIPQIIDNLKKDHWIDDYKLLESLAQQNLNSGDKGAYALKQKWLQKGCEKQVIDEVLTQFDFSEVAIKVTSKLLRKYQGKLPTKSLKDKLIQNLINKGFSFQESKNAINQLELEADEENEQALLYKEIEKQYQKFSKKYDGYELKQHLTQSLFRKGYDFDAIASALREYF.

The protein belongs to the RecX family.

It localises to the cytoplasm. Modulates RecA activity. The chain is Regulatory protein RecX from Streptococcus thermophilus (strain CNRZ 1066).